We begin with the raw amino-acid sequence, 498 residues long: MEAPRPAGTFVVVGGGIAGVTCAEQLAVSFPEEDILLVTASPVIKAVTNFRQVSKVLEEFDVEEQPGTMLESRFPNIKVIESGVKQLKSEDHCIFTEDGREFVYKKLCLCAGAKPKLIYEGNPRVLGIRDTDSAQEFQKELAKARRIMIVGNGGIALELAYEIEGCEVVWAIKDNAIGNTFFDAGAAEFLTSKLMSEKSEAKIAHKRTIYTVEEAKKETRTKSKADYVGSALGPDWHGGLALKGTEEFSHSVHIETRCEVKKIYLEEEFKIMKKKSLAFPKDHHKSVTADKEMWPVYVELTNGTIYGCDFLVSATGVTPNVHPFLHRNNFALGEDGGLRVDDQMRTSLPDIYAAGDICTACWQPSPVWQQMRLWTQARQMGYYAAKCMAAASMGHPIDMDFSFELFAHVTKFFNYKVVLLGKYNAQGLGADHELMLRCTRGQEYVKVVMQNGRMMGAVLIGETDLEETFENLILNQMDLSSYGEDLLDPNIDIEDYFD.

N-acetylmethionine is present on Met1.

Belongs to the class-I pyridine nucleotide-disulfide oxidoreductase family. PYROXD1 subfamily. FAD is required as a cofactor.

The protein localises to the nucleus. It is found in the cytoplasm. Its subcellular location is the myofibril. The protein resides in the sarcomere. In terms of biological role, probable FAD-dependent oxidoreductase; involved in the cellular oxidative stress response. Required for normal sarcomere structure and muscle fiber integrity. This Mus musculus (Mouse) protein is Pyridine nucleotide-disulfide oxidoreductase domain-containing protein 1 (Pyroxd1).